The sequence spans 157 residues: Large ribosomal subunit protein uL11 (157 aa).

The protein belongs to the universal ribosomal protein uL11 family. Part of the ribosomal stalk of the 50S ribosomal subunit. Interacts with L10 and the large rRNA to form the base of the stalk. L10 forms an elongated spine to which L12 dimers bind in a sequential fashion forming a multimeric L10(L12)X complex.

In terms of biological role, forms part of the ribosomal stalk which helps the ribosome interact with GTP-bound translation factors. The sequence is that of Large ribosomal subunit protein uL11 from Archaeoglobus fulgidus (strain ATCC 49558 / DSM 4304 / JCM 9628 / NBRC 100126 / VC-16).